Reading from the N-terminus, the 161-residue chain is Large ribosomal subunit protein uL11 (161 aa).

It belongs to the universal ribosomal protein uL11 family. In terms of assembly, part of the ribosomal stalk of the 50S ribosomal subunit. Interacts with L10 and the large rRNA to form the base of the stalk. L10 forms an elongated spine to which L12 dimers bind in a sequential fashion forming a multimeric L10(L12)X complex.

Functionally, forms part of the ribosomal stalk which helps the ribosome interact with GTP-bound translation factors. The sequence is that of Large ribosomal subunit protein uL11 from Methanococcoides burtonii (strain DSM 6242 / NBRC 107633 / OCM 468 / ACE-M).